The primary structure comprises 740 residues: F-BAR and double SH3 domains protein 2 (740 aa).

An F-BAR domain is found at 8–282 (VKVTQELKNI…NSSKVVRDYN (275 aa)). The tract at residues 303–323 (PCDSDTSRQLESETGTTEEHS) is disordered. Basic and acidic residues predominate over residues 307–323 (DTSRQLESETGTTEEHS). Residues 356–397 (GAAVSEQSRAELEQKIDEARENIRKAEIIKLKAEARLDLLKQ) are a coiled coil. 2 consecutive SH3 domains span residues 469–530 (NYPL…FPTS) and 567–629 (ASVC…ELSA). A required and sufficient for location at clathrin-coated pits region spans residues 567–629 (ASVCFVKALY…PSVLVEELSA (63 aa)). Residues 633 to 740 (GDTPWMREIQ…KIEDVEITLV (108 aa)) are disordered. Pro residues predominate over residues 646 to 657 (SPKPHASLPPLP). Phosphoserine occurs at positions 675 and 681.

Homodimer. Interacts (via SH3 domain 2) with ITSN1 (via SH3 domain 4). Recruited to clathrin-coated pits during a mid-to-late stage of assembly via interaction with ITSN1. Interacts (via SH3 domain 1) with WASL. Interacts with WAS. Interacts with CASK and MAGI1. CASK inhibits interaction with MAGI1. In terms of processing, phosphorylated. Phosphorylation on a Ser residue is important for recruitment to the cell membrane and for its role in promoting endocytosis. As to expression, liver, brain, heart, placenta, skeletal muscle, pancreas, lung and kidney.

The protein localises to the cytoplasm. Its subcellular location is the cell junction. It localises to the membrane. It is found in the clathrin-coated pit. The protein resides in the cell membrane. The protein localises to the cell projection. Its subcellular location is the stereocilium. Adapter protein that plays a role in endocytosis via clathrin-coated pits. Contributes to the internalization of cell surface receptors, such as integrin ITGB1 and transferrin receptor. Promotes endocytosis of EGFR in cancer cells, and thereby contributes to the down-regulation of EGFR signaling. Recruited to clathrin-coated pits during a mid-to-late stage of assembly, where it is required for normal progress from U-shaped intermediate stage pits to terminal, omega-shaped pits. Binds to membranes enriched in phosphatidylinositol 3,4-bisphosphate or phosphatidylinositol 3,4,5-trisphosphate. When bound to membranes, promotes actin polymerization via its interaction with WAS and/or WASL which leads to the activation of the Arp2/3 complex. Does not promote actin polymerisation in the absence of membranes. This is F-BAR and double SH3 domains protein 2 (FCHSD2) from Homo sapiens (Human).